A 508-amino-acid polypeptide reads, in one-letter code: MKLAYWMYAGPAHIGTLRIASSFKNVHAIMHAPLGDDYFNVMRSMLERERDFTPVTASIVDRNVLARGSQEKVVDNIVRKDGEENPDLIVLTPTCTSSILQEDLANFVDRAQMDAKGDVMLADVNHYRYNELQAADRTLHQIVKFYLEKAQKKGELPQRKTEKPSVNIIGISTLGFHNQHDCTELKRLMADLGIEVNEVIPEGASVHNLKNLPKAWFNLVPYRELGLATAGYLEEQFGMSYVDITPMGVVETARCIRKIQQLINAQGAEVDYEEFIKEQTLYVSQAAWFSRSIDCQNLTGKKAVVFGDNTHAAAITKILAREMGIHVVLAGTYCKYDADWFREQVSEYCDEVLISDDNAAIGDAIARLEPSAIFGTQMERHVGKRLDIPCGVIASPIHIQNFPIGYKPFCGYEGTNQITDLIYNSFTLGMEDHLLEIFGGHDTKEVITKGISADSDLNWNKEAQAELNKVPGFVRGKVKRNTEKFARERGFSVITLEVMYAAKEAVGA.

Aspartate 36 provides a ligand contact to [4Fe-4S] cluster. Aspartate 294 serves as the catalytic Proton donor. 429–430 (GM) serves as a coordination point for substrate.

Belongs to the ChlB/BchB/BchZ family. As to quaternary structure, protochlorophyllide reductase is composed of three subunits; ChlL, ChlN and ChlB. Forms a heterotetramer of two ChlB and two ChlN subunits. Requires [4Fe-4S] cluster as cofactor.

It catalyses the reaction chlorophyllide a + oxidized 2[4Fe-4S]-[ferredoxin] + 2 ADP + 2 phosphate = protochlorophyllide a + reduced 2[4Fe-4S]-[ferredoxin] + 2 ATP + 2 H2O. It functions in the pathway porphyrin-containing compound metabolism; chlorophyll biosynthesis (light-independent). Functionally, component of the dark-operative protochlorophyllide reductase (DPOR) that uses Mg-ATP and reduced ferredoxin to reduce ring D of protochlorophyllide (Pchlide) to form chlorophyllide a (Chlide). This reaction is light-independent. The NB-protein (ChlN-ChlB) is the catalytic component of the complex. The chain is Light-independent protochlorophyllide reductase subunit B from Rippkaea orientalis (strain PCC 8801 / RF-1) (Cyanothece sp. (strain PCC 8801)).